We begin with the raw amino-acid sequence, 739 residues long: Phosphoribosylformylglycinamidine synthase subunit PurL (739 aa).

Histidine 54 is a catalytic residue. The ATP site is built by tyrosine 57 and lysine 96. Glutamate 98 is a binding site for Mg(2+). Substrate contacts are provided by residues 99-102 and arginine 121; that span reads SHNH. Histidine 100 (proton acceptor) is an active-site residue. Aspartate 122 is a binding site for Mg(2+). Residue glutamine 245 coordinates substrate. A Mg(2+)-binding site is contributed by aspartate 273. Substrate is bound at residue 317 to 319; it reads ESQ. Aspartate 500 and glycine 537 together coordinate ATP. Asparagine 538 is a binding site for Mg(2+). Serine 540 lines the substrate pocket.

The protein belongs to the FGAMS family. Monomer. Part of the FGAM synthase complex composed of 1 PurL, 1 PurQ and 2 PurS subunits.

It localises to the cytoplasm. The catalysed reaction is N(2)-formyl-N(1)-(5-phospho-beta-D-ribosyl)glycinamide + L-glutamine + ATP + H2O = 2-formamido-N(1)-(5-O-phospho-beta-D-ribosyl)acetamidine + L-glutamate + ADP + phosphate + H(+). Its pathway is purine metabolism; IMP biosynthesis via de novo pathway; 5-amino-1-(5-phospho-D-ribosyl)imidazole from N(2)-formyl-N(1)-(5-phospho-D-ribosyl)glycinamide: step 1/2. Functionally, part of the phosphoribosylformylglycinamidine synthase complex involved in the purines biosynthetic pathway. Catalyzes the ATP-dependent conversion of formylglycinamide ribonucleotide (FGAR) and glutamine to yield formylglycinamidine ribonucleotide (FGAM) and glutamate. The FGAM synthase complex is composed of three subunits. PurQ produces an ammonia molecule by converting glutamine to glutamate. PurL transfers the ammonia molecule to FGAR to form FGAM in an ATP-dependent manner. PurS interacts with PurQ and PurL and is thought to assist in the transfer of the ammonia molecule from PurQ to PurL. In Bacillus anthracis (strain A0248), this protein is Phosphoribosylformylglycinamidine synthase subunit PurL.